A 297-amino-acid polypeptide reads, in one-letter code: MRIVLITGISGSGKSVALNALEDAGYYCVDNLPPHVLPELARHLANEGQNRLAVAIDARSSASLDEMPGLIRALSREHDVRVLFLNASTQSLIQRFSETRRRHPLSGSPSHDADVGLLVSLEEAIERERDLVAPLAEFGHQIDTSNLRANVLRTWVKRFIEQKNDDLVLMFESFGFKRGVPLDADFMFDVRALPNPYYDHELRPLTGLDQPVVAFLDALPVVHQMLGDIESFLIKWLPHFREDNRSYLTVAIGCTGGQHRSVFLAETLAARLSRQANVIVRHRDAPVAVDASSRLVT.

Residue 8-15 (GISGSGKS) coordinates ATP. 57–60 (DARS) contributes to the GTP binding site.

Belongs to the RapZ-like family.

Displays ATPase and GTPase activities. The chain is Nucleotide-binding protein BTH_I0482 from Burkholderia thailandensis (strain ATCC 700388 / DSM 13276 / CCUG 48851 / CIP 106301 / E264).